Consider the following 201-residue polypeptide: Small ribosomal subunit protein uS4c (201 aa).

Positions 13-43 are disordered; that stretch reads RRLGDLPGLSRKAIKRPYPPGEHGQKPRKPS. The S4 RNA-binding domain occupies 90–154; it reads MRLDNTIFRL…SKQLVESYLA (65 aa).

It belongs to the universal ribosomal protein uS4 family. In terms of assembly, part of the 30S ribosomal subunit. Contacts protein S5. The interaction surface between S4 and S5 is involved in control of translational fidelity.

It localises to the plastid. The protein localises to the chloroplast. Functionally, one of the primary rRNA binding proteins, it binds directly to 16S rRNA where it nucleates assembly of the body of the 30S subunit. In terms of biological role, with S5 and S12 plays an important role in translational accuracy. The protein is Small ribosomal subunit protein uS4c (rps4) of Porphyra purpurea (Red seaweed).